The following is a 201-amino-acid chain: ATP-dependent Clp protease proteolytic subunit (201 aa).

The active-site Nucleophile is Ser-98. His-123 is an active-site residue.

This sequence belongs to the peptidase S14 family. As to quaternary structure, fourteen ClpP subunits assemble into 2 heptameric rings which stack back to back to give a disk-like structure with a central cavity, resembling the structure of eukaryotic proteasomes.

The protein localises to the cytoplasm. The catalysed reaction is Hydrolysis of proteins to small peptides in the presence of ATP and magnesium. alpha-casein is the usual test substrate. In the absence of ATP, only oligopeptides shorter than five residues are hydrolyzed (such as succinyl-Leu-Tyr-|-NHMec, and Leu-Tyr-Leu-|-Tyr-Trp, in which cleavage of the -Tyr-|-Leu- and -Tyr-|-Trp bonds also occurs).. Cleaves peptides in various proteins in a process that requires ATP hydrolysis. Has a chymotrypsin-like activity. Plays a major role in the degradation of misfolded proteins. The chain is ATP-dependent Clp protease proteolytic subunit from Rickettsia felis (strain ATCC VR-1525 / URRWXCal2) (Rickettsia azadi).